The chain runs to 155 residues: Late embryogenesis abundant protein 2 (155 aa).

The disordered stretch occupies residues 1–155 (MTSHDQSYRA…DKDHFPTNRH (155 aa)). Composition is skewed to basic and acidic residues over residues 11 to 21 (GEAKGRTEEKT) and 28 to 39 (IEDKAQAAKEKA). Over residues 40–78 (QQAAQTAKDKTSQTAQAAKEKTQQTAQAAKDKTQQTTQA) the composition is skewed to low complexity. Repeat copies occupy residues 53–63 (TAQAAKEKTQQ) and 64–74 (TAQAAKDKTQQ). The tract at residues 53-74 (TAQAAKEKTQQTAQAAKDKTQQ) is 2 X 11 AA approximate tandem repeats of T-A-Q-A-A-K-E-K-T-Q-Q. The segment covering 79–95 (TKEKAQDTTGRAKEKGS) has biased composition (basic and acidic residues). Positions 97–120 (MGQSTKETAQSGKDNSAGFLQQTG) are enriched in polar residues. Residues 144–155 (DQDKDHFPTNRH) are compositionally biased toward basic and acidic residues.

Belongs to the LEA type 4 family. Highest expression is found in seeds. No expression detected in adult tissues.

The protein is Late embryogenesis abundant protein 2 of Cicer arietinum (Chickpea).